Here is a 31-residue protein sequence, read N- to C-terminus: Cyclotide vibi-H (31 aa).

A cross-link (cyclopeptide (Gly-Asn)) is located at residues 1 to 31; sequence GLLPCAESCVYIPCLTTVIGCSCKSKVCYKN. 3 disulfides stabilise this stretch: Cys5/Cys21, Cys9/Cys23, and Cys14/Cys28.

In terms of processing, this is a cyclic peptide.

Functionally, probably participates in a plant defense mechanism. Has cytotoxic activity, active against a human lymphoma cell line with an IC(50) of 1.6 uM. This is Cyclotide vibi-H from Viola biflora (Yellow wood violet).